Reading from the N-terminus, the 643-residue chain is Phosphomethylpyrimidine synthase (643 aa).

Residues N248, M277, Y306, H342, 362-364 (SRG), 403-406 (DGLR), and E442 contribute to the substrate site. Residue H446 coordinates Zn(2+). Residue Y469 participates in substrate binding. H510 is a binding site for Zn(2+). 3 residues coordinate [4Fe-4S] cluster: C590, C593, and C598.

This sequence belongs to the ThiC family. In terms of assembly, homodimer. It depends on [4Fe-4S] cluster as a cofactor.

The enzyme catalyses 5-amino-1-(5-phospho-beta-D-ribosyl)imidazole + S-adenosyl-L-methionine = 4-amino-2-methyl-5-(phosphooxymethyl)pyrimidine + CO + 5'-deoxyadenosine + formate + L-methionine + 3 H(+). It participates in cofactor biosynthesis; thiamine diphosphate biosynthesis. In terms of biological role, catalyzes the synthesis of the hydroxymethylpyrimidine phosphate (HMP-P) moiety of thiamine from aminoimidazole ribotide (AIR) in a radical S-adenosyl-L-methionine (SAM)-dependent reaction. The protein is Phosphomethylpyrimidine synthase of Burkholderia multivorans (strain ATCC 17616 / 249).